The primary structure comprises 485 residues: Aerolysin-5 (485 aa).

A signal peptide spans 1 to 23; it reads MQKLKITGLSLIISGLLMAQRHA. Cystine bridges form between cysteine 42–cysteine 98 and cysteine 182–cysteine 187. Positions 68 to 84 are interaction with host N-linked glycan; the sequence is WQISGLANGWVIMGPVY. The tract at residues 256–288 is part of the transmembrane beta-barrel after proteolytic activation of the toxin and insertion into the host membrane; it reads YGLSEKVTTKNKFKWPLVGETELSIEIAANQSW. The segment at 346-355 is interaction with glycans from host GPI-anchor; sequence RWGGNAWYTH. The propeptide occupies 446-485; the sequence is AADGKAPRALSARRGEQGLRLAIPLECRKSSPGLASATSA.

Belongs to the aerolysin family. Homodimer in solution; homoheptamer in the host membrane. After binding to GPI-anchored proteins in target membranes and proteolytic removal of the C-terminal propeptide, the protein assembles into a heptameric pre-pore complex. A further conformation change leads to insertion into the host membrane. Post-translationally, proteolytic cleavage and subsequent release of the propeptide trigger a major conformation change, leading to the formation of a heptameric pre-pore that then inserts into the host membrane.

Its subcellular location is the secreted. It is found in the host cell membrane. Its function is as follows. Secreted, cytolytic toxin that forms pores in host membranes after proteolytic removal of a C-terminal propeptide, leading to destruction of the membrane permeability barrier and cell death. The pores are formed by transmembrane beta-strands and are approximately 3 nm in diameter. The polypeptide is Aerolysin-5 (ahh5) (Aeromonas hydrophila).